A 175-amino-acid chain; its full sequence is Large ribosomal subunit protein bL17 (175 aa).

A disordered region spans residues 124–175; the sequence is VKKSKPTAPAQAVATKPAVEETREAAAAQPQEPEVEISEVKDPAEECEAKAD. The segment covering 161–175 has biased composition (basic and acidic residues); it reads SEVKDPAEECEAKAD.

This sequence belongs to the bacterial ribosomal protein bL17 family. As to quaternary structure, part of the 50S ribosomal subunit. Contacts protein L32.

This is Large ribosomal subunit protein bL17 from Geobacter sulfurreducens (strain ATCC 51573 / DSM 12127 / PCA).